Here is a 360-residue protein sequence, read N- to C-terminus: sn-glycerol-3-phosphate import ATP-binding protein UgpC (360 aa).

The region spanning 4-235 is the ABC transporter domain; that stretch reads LSLKGVRKSY…PATTFVASFI (232 aa). Residue 37-44 participates in ATP binding; sequence GPSGCGKS.

It belongs to the ABC transporter superfamily. sn-glycerol-3-phosphate importer (TC 3.A.1.1.3) family. The complex is composed of two ATP-binding proteins (UgpC), two transmembrane proteins (UgpA and UgpE) and a solute-binding protein (UgpB).

It is found in the cell inner membrane. The enzyme catalyses sn-glycerol 3-phosphate(out) + ATP + H2O = sn-glycerol 3-phosphate(in) + ADP + phosphate + H(+). In terms of biological role, part of the ABC transporter complex UgpBAEC involved in sn-glycerol-3-phosphate (G3P) import. Responsible for energy coupling to the transport system. The sequence is that of sn-glycerol-3-phosphate import ATP-binding protein UgpC from Burkholderia thailandensis (strain ATCC 700388 / DSM 13276 / CCUG 48851 / CIP 106301 / E264).